The primary structure comprises 109 residues: Putative double-stranded DNA mimic protein KPK_2119 (109 aa).

This sequence belongs to the putative dsDNA mimic protein family.

In terms of biological role, may act as a double-stranded DNA (dsDNA) mimic. Probably regulates the activity of a dsDNA-binding protein. In Klebsiella pneumoniae (strain 342), this protein is Putative double-stranded DNA mimic protein KPK_2119.